We begin with the raw amino-acid sequence, 120 residues long: NAD(P)H-quinone oxidoreductase subunit 3, chloroplastic (120 aa).

3 consecutive transmembrane segments (helical) span residues 7–27 (YNYF…AFSI), 64–84 (MFAL…PWAM), and 89–109 (LGIP…IGLI).

It belongs to the complex I subunit 3 family. In terms of assembly, NDH is composed of at least 16 different subunits, 5 of which are encoded in the nucleus.

The protein localises to the plastid. It is found in the chloroplast thylakoid membrane. The enzyme catalyses a plastoquinone + NADH + (n+1) H(+)(in) = a plastoquinol + NAD(+) + n H(+)(out). It carries out the reaction a plastoquinone + NADPH + (n+1) H(+)(in) = a plastoquinol + NADP(+) + n H(+)(out). NDH shuttles electrons from NAD(P)H:plastoquinone, via FMN and iron-sulfur (Fe-S) centers, to quinones in the photosynthetic chain and possibly in a chloroplast respiratory chain. The immediate electron acceptor for the enzyme in this species is believed to be plastoquinone. Couples the redox reaction to proton translocation, and thus conserves the redox energy in a proton gradient. In Anthoceros angustus (Hornwort), this protein is NAD(P)H-quinone oxidoreductase subunit 3, chloroplastic.